Reading from the N-terminus, the 1365-residue chain is Glucosyltransferase-S (1365 aa).

The segment at residues 1 to 36 (MEKNLRYKLHKVKKQWVAIGVTTVTLSFLAGGQVVA) is a signal peptide (or 37). Composition is skewed to polar residues over residues 80–89 (DQTATSQVSP) and 127–146 (RQSA…TSDQ). 2 disordered regions span residues 80–99 (DQTA…DNQV) and 127–152 (RQSA…HLET). Cell wall-binding repeat units lie at residues 146 to 166 (QPGH…NGQR) and 168 to 187 (KNYS…QTGE). The tract at residues 200-1000 (QDNVPDSYQA…KPIDPSVKIT (801 aa)) is catalytic; approximate. Cell wall-binding repeat units follow at residues 1052-1071 (ANGF…NGQE), 1073-1092 (KNRF…DGKM), 1093-1112 (ATGK…NGKQ), 1113-1133 (LKEG…NGRT), 1136-1159 (NKGF…DGTI), 1160-1179 (AIGL…YGYQ), 1234-1253 (LTGE…NGVQ), 1278-1298 (GKGW…SGQV), 1299-1318 (LTGL…KGIQ), and 1343-1362 (RDRW…NGLA).

Belongs to the glycosyl hydrolase 70 family.

It carries out the reaction [(1-&gt;6)-alpha-D-glucosyl](n) + sucrose = [(1-&gt;6)-alpha-D-glucosyl](n+1) + D-fructose. Glucan synthesis by GTF-S is independent of primer glucan unlike GTF-I. In terms of biological role, production of extracellular glucans, that are thought to play a key role in the development of the dental plaque because of their ability to adhere to smooth surfaces and mediate the aggregation of bacterial cells and food debris. The polypeptide is Glucosyltransferase-S (gtfS) (Streptococcus downei (Streptococcus sobrinus)).